Consider the following 170-residue polypeptide: MDLKRFIRDIPDFPQKGIVFRDITPLLRNQEAFKEAIDRMCELVSDRDFDLVVAPEARGFILGATMAYKLGKGFVPVRKPGKLPYKTVYEEYQLEYGTERLHIHEDAVEKGQRVLIVDDVLATGGTAEALIRLVKKLGGEVVSLAFLVELSYLEPRKRLKSYDIKTLIVY.

The protein belongs to the purine/pyrimidine phosphoribosyltransferase family. As to quaternary structure, homodimer.

The protein localises to the cytoplasm. The catalysed reaction is AMP + diphosphate = 5-phospho-alpha-D-ribose 1-diphosphate + adenine. It functions in the pathway purine metabolism; AMP biosynthesis via salvage pathway; AMP from adenine: step 1/1. Its function is as follows. Catalyzes a salvage reaction resulting in the formation of AMP, that is energically less costly than de novo synthesis. The chain is Adenine phosphoribosyltransferase from Thermotoga petrophila (strain ATCC BAA-488 / DSM 13995 / JCM 10881 / RKU-1).